Here is a 618-residue protein sequence, read N- to C-terminus: Proline--tRNA ligase (618 aa).

Belongs to the class-II aminoacyl-tRNA synthetase family. ProS type 1 subfamily. Homodimer.

Its subcellular location is the cytoplasm. It carries out the reaction tRNA(Pro) + L-proline + ATP = L-prolyl-tRNA(Pro) + AMP + diphosphate. In terms of biological role, catalyzes the attachment of proline to tRNA(Pro) in a two-step reaction: proline is first activated by ATP to form Pro-AMP and then transferred to the acceptor end of tRNA(Pro). As ProRS can inadvertently accommodate and process non-cognate amino acids such as alanine and cysteine, to avoid such errors it has two additional distinct editing activities against alanine. One activity is designated as 'pretransfer' editing and involves the tRNA(Pro)-independent hydrolysis of activated Ala-AMP. The other activity is designated 'posttransfer' editing and involves deacylation of mischarged Ala-tRNA(Pro). The misacylated Cys-tRNA(Pro) is not edited by ProRS. This Streptococcus pyogenes serotype M4 (strain MGAS10750) protein is Proline--tRNA ligase.